The chain runs to 519 residues: Cytochrome P450 4A22 (519 aa).

Residues 1–4 constitute a propeptide that is removed on maturation; sequence MSVS. Position 321 (E321) interacts with heme. S440 bears the Phosphoserine mark. C457 contributes to the heme binding site.

Belongs to the cytochrome P450 family.

The protein resides in the endoplasmic reticulum membrane. It is found in the microsome membrane. It catalyses the reaction an omega-methyl-long-chain fatty acid + reduced [NADPH--hemoprotein reductase] + O2 = an omega-hydroxy-long-chain fatty acid + oxidized [NADPH--hemoprotein reductase] + H2O + H(+). In terms of biological role, catalyzes the omega- and (omega-1)-hydroxylation of various fatty acids such as laurate and palmitate. Shows no activity towards arachidonic acid and prostaglandin A1. Lacks functional activity in the kidney and does not contribute to renal 20-hydroxyeicosatetraenoic acid (20-HETE) biosynthesis. The protein is Cytochrome P450 4A22 (CYP4A22) of Homo sapiens (Human).